An 89-amino-acid chain; its full sequence is Putative regulatory protein PCC8801_0196 (89 aa).

It belongs to the RemA family.

The polypeptide is Putative regulatory protein PCC8801_0196 (Rippkaea orientalis (strain PCC 8801 / RF-1) (Cyanothece sp. (strain PCC 8801))).